A 317-amino-acid chain; its full sequence is MYTKILGTGSYLPVQVRTNADLEKMVDTSDEWIVSRTGIRERRIAAADETVATMGFHAAEKALEMAGVAKEDIGLIVVATTTSTHAFPSSACQVQQMLGIKDCAAFDLAAACAGFTYALSVADQYVKNGAVKHALVIGADVLSRTLDPEDRGTIILFGDGAGAVLLGASEEPGILSTHLHADGSYGGLLTLPFKDRQDQDKPAYVTMAGNEVFKVAVTELAHIVDETLQANNLDRSALDWLVPHQANLRIISATAKKLGMGMDKVVVTLDRHGNTSAASVPAALDEAVRDGRIQRGQLVLLEAFGGGFTWGSALVRF.

Catalysis depends on residues C112 and H244. Residues 245–249 form an ACP-binding region; sequence QANLR. N274 is an active-site residue.

The protein belongs to the thiolase-like superfamily. FabH family. In terms of assembly, homodimer.

It is found in the cytoplasm. It carries out the reaction malonyl-[ACP] + acetyl-CoA + H(+) = 3-oxobutanoyl-[ACP] + CO2 + CoA. The protein operates within lipid metabolism; fatty acid biosynthesis. Its function is as follows. Catalyzes the condensation reaction of fatty acid synthesis by the addition to an acyl acceptor of two carbons from malonyl-ACP. Catalyzes the first condensation reaction which initiates fatty acid synthesis and may therefore play a role in governing the total rate of fatty acid production. Possesses both acetoacetyl-ACP synthase and acetyl transacylase activities. Its substrate specificity determines the biosynthesis of branched-chain and/or straight-chain of fatty acids. The protein is Beta-ketoacyl-[acyl-carrier-protein] synthase III of Serratia proteamaculans (strain 568).